Reading from the N-terminus, the 224-residue chain is Uracil-DNA glycosylase 2 (224 aa).

Asp-64 (proton acceptor) is an active-site residue.

This sequence belongs to the uracil-DNA glycosylase (UDG) superfamily. UNG family.

The protein resides in the cytoplasm. The catalysed reaction is Hydrolyzes single-stranded DNA or mismatched double-stranded DNA and polynucleotides, releasing free uracil.. Functionally, excises uracil residues from the DNA which can arise as a result of misincorporation of dUMP residues by DNA polymerase or due to deamination of cytosine. The sequence is that of Uracil-DNA glycosylase 2 from Listeria innocua serovar 6a (strain ATCC BAA-680 / CLIP 11262).